Consider the following 455-residue polypeptide: Carbamoyl phosphate synthase arginine-specific small chain (455 aa).

The transit peptide at 1 to 28 (MFARFCKAIPAKGRAFPSVNASIQSRLM) directs the protein to the mitochondrion. The Glutamine amidotransferase type-1 domain maps to 219 to 406 (HVAVIDCGVK…IDSVRKYKAN (188 aa)). Catalysis depends on C295, which acts as the Nucleophile. Active-site residues include H379 and E381.

Belongs to the CarA family. As to quaternary structure, heterodimer composed of 2 chains; the small (or glutamine) chain promotes the hydrolysis of glutamine to ammonia, which is used by the large (or ammonia) chain to synthesize carbamoyl phosphate.

It localises to the mitochondrion matrix. It catalyses the reaction hydrogencarbonate + L-glutamine + 2 ATP + H2O = carbamoyl phosphate + L-glutamate + 2 ADP + phosphate + 2 H(+). It carries out the reaction L-glutamine + H2O = L-glutamate + NH4(+). It participates in amino-acid biosynthesis; L-arginine biosynthesis; carbamoyl phosphate from bicarbonate: step 1/1. Functionally, small subunit of the arginine-specific carbamoyl phosphate synthase (CPSase). CPSase catalyzes the formation of carbamoyl phosphate from the ammonia moiety of glutamine, carbonate, and phosphate donated by ATP, the first step of the arginine biosynthetic pathway. The small subunit (glutamine amidotransferase) binds and cleaves glutamine to supply the large subunit with the substrate ammonia. In Aspergillus clavatus (strain ATCC 1007 / CBS 513.65 / DSM 816 / NCTC 3887 / NRRL 1 / QM 1276 / 107), this protein is Carbamoyl phosphate synthase arginine-specific small chain (cpa1).